Reading from the N-terminus, the 623-residue chain is Probable lysophospholipase 5 (623 aa).

Residues 1–19 form the signal peptide; the sequence is MKLSSFGLFLALQLLPALG. The 541-residue stretch at 67-607 folds into the PLA2c domain; the sequence is ACPSGSLLRP…NQYCWNGTIA (541 aa). Residues Asn118, Asn153, Asn187, Asn232, Asn256, Asn264, Asn293, Asn331, Asn360, Asn367, Asn400, Asn403, Asn474, Asn508, Asn513, Asn537, Asn564, Asn586, and Asn603 are each glycosylated (N-linked (GlcNAc...) asparagine).

Belongs to the lysophospholipase family.

It is found in the secreted. It carries out the reaction a 1-acyl-sn-glycero-3-phosphocholine + H2O = sn-glycerol 3-phosphocholine + a fatty acid + H(+). Functionally, catalyzes the release of fatty acids from lysophospholipids. This is Probable lysophospholipase 5 (plb5) from Schizosaccharomyces pombe (strain 972 / ATCC 24843) (Fission yeast).